Consider the following 344-residue polypeptide: MFSSLYPLVRAQLFRMDAEDAHHLTLRLLRAAGRTGLAGALAPRVPDSPRTVMGLTFRNPVGLAAGLDKDGACIDGLAALGFGFIEVGTVTPRAQPGNPRPRMFRLPQADAVINRMGFNNAGVDQFVKNVQAARYRGTLGLNIGKNADTPIERAADDYLYCLERVYPFASYVTVNISSPNTKNLRQLQGAGELDALLAALKDKQQRLADLHGKLVPLALKIAPDLDDEQVKSIADTLLRHQFEGVIATNTTLSRTAVQGLPHADEAGGLSGRPVFDASNEVIRKLRAEVGGDVPIIGVGGIFSGADAQAKLDAGASLVQLYTGFIYRGPALVAECAQALAMRAA.

FMN contacts are provided by residues 65 to 69 (AGLDK) and Thr-89. Lys-69 lines the substrate pocket. 114–118 (NRMGF) contacts substrate. Positions 142 and 175 each coordinate FMN. Substrate is bound at residue Asn-175. Residue Ser-178 is the Nucleophile of the active site. Asn-180 is a binding site for substrate. Residues Lys-220 and Thr-248 each contribute to the FMN site. 249–250 (NT) provides a ligand contact to substrate. FMN contacts are provided by residues Gly-271, Gly-300, and 321–322 (YT).

It belongs to the dihydroorotate dehydrogenase family. Type 2 subfamily. In terms of assembly, monomer. It depends on FMN as a cofactor.

It is found in the cell membrane. The enzyme catalyses (S)-dihydroorotate + a quinone = orotate + a quinol. Its pathway is pyrimidine metabolism; UMP biosynthesis via de novo pathway; orotate from (S)-dihydroorotate (quinone route): step 1/1. Functionally, catalyzes the conversion of dihydroorotate to orotate with quinone as electron acceptor. This Paraburkholderia phymatum (strain DSM 17167 / CIP 108236 / LMG 21445 / STM815) (Burkholderia phymatum) protein is Dihydroorotate dehydrogenase (quinone).